The chain runs to 402 residues: Putative F-box protein At3g20030 (402 aa).

The 56-residue stretch at 1–56 folds into the F-box domain; it reads MTMMSDLSQDLLEEILSRVPRTSLGAVRSTCKRWNTLFKDRILCKAEETRDQFRFI.

The protein is Putative F-box protein At3g20030 of Arabidopsis thaliana (Mouse-ear cress).